We begin with the raw amino-acid sequence, 338 residues long: Ketol-acid reductoisomerase (NADP(+)) (338 aa).

One can recognise a KARI N-terminal Rossmann domain in the interval 1–181 (MKVFYDKDAD…GGGRAGIIET (181 aa)). NADP(+)-binding positions include 24–27 (YGSQ), R47, and S52. H107 is an active-site residue. Residue G133 participates in NADP(+) binding. The region spanning 182 to 327 (NFREETETDL…AKLRSMMPWI (146 aa)) is the KARI C-terminal knotted domain. Mg(2+) is bound by residues D190, E194, E226, and E230. S251 serves as a coordination point for substrate.

This sequence belongs to the ketol-acid reductoisomerase family. Requires Mg(2+) as cofactor.

The enzyme catalyses (2R)-2,3-dihydroxy-3-methylbutanoate + NADP(+) = (2S)-2-acetolactate + NADPH + H(+). It catalyses the reaction (2R,3R)-2,3-dihydroxy-3-methylpentanoate + NADP(+) = (S)-2-ethyl-2-hydroxy-3-oxobutanoate + NADPH + H(+). It participates in amino-acid biosynthesis; L-isoleucine biosynthesis; L-isoleucine from 2-oxobutanoate: step 2/4. Its pathway is amino-acid biosynthesis; L-valine biosynthesis; L-valine from pyruvate: step 2/4. Functionally, involved in the biosynthesis of branched-chain amino acids (BCAA). Catalyzes an alkyl-migration followed by a ketol-acid reduction of (S)-2-acetolactate (S2AL) to yield (R)-2,3-dihydroxy-isovalerate. In the isomerase reaction, S2AL is rearranged via a Mg-dependent methyl migration to produce 3-hydroxy-3-methyl-2-ketobutyrate (HMKB). In the reductase reaction, this 2-ketoacid undergoes a metal-dependent reduction by NADPH to yield (R)-2,3-dihydroxy-isovalerate. The protein is Ketol-acid reductoisomerase (NADP(+)) of Paraburkholderia phytofirmans (strain DSM 17436 / LMG 22146 / PsJN) (Burkholderia phytofirmans).